The following is a 196-amino-acid chain: Pyridoxal 5'-phosphate synthase subunit PdxT (196 aa).

Residue 47–49 participates in L-glutamine binding; sequence GES. The active-site Nucleophile is cysteine 79. Residues arginine 106 and 134 to 135 each bind L-glutamine; that span reads IR. Catalysis depends on charge relay system residues histidine 170 and glutamate 172.

Belongs to the glutaminase PdxT/SNO family. As to quaternary structure, in the presence of PdxS, forms a dodecamer of heterodimers. Only shows activity in the heterodimer.

The enzyme catalyses aldehydo-D-ribose 5-phosphate + D-glyceraldehyde 3-phosphate + L-glutamine = pyridoxal 5'-phosphate + L-glutamate + phosphate + 3 H2O + H(+). It carries out the reaction L-glutamine + H2O = L-glutamate + NH4(+). It functions in the pathway cofactor biosynthesis; pyridoxal 5'-phosphate biosynthesis. Functionally, catalyzes the hydrolysis of glutamine to glutamate and ammonia as part of the biosynthesis of pyridoxal 5'-phosphate. The resulting ammonia molecule is channeled to the active site of PdxS. This Bacillus pumilus (strain SAFR-032) protein is Pyridoxal 5'-phosphate synthase subunit PdxT.